The following is a 211-amino-acid chain: Putative F-box protein At1g52490 (211 aa).

An F-box domain is found at Glu-12–Val-59.

The sequence is that of Putative F-box protein At1g52490 from Arabidopsis thaliana (Mouse-ear cress).